We begin with the raw amino-acid sequence, 444 residues long: Pentatricopeptide repeat-containing protein At4g35850, mitochondrial (444 aa).

A mitochondrion-targeting transit peptide spans M1 to F25. PPR repeat units lie at residues D40–P74, T75–P109, D110–P144, N145–L179, N255–T289, and D290–A325.

Belongs to the PPR family. P subfamily.

The protein resides in the mitochondrion. This chain is Pentatricopeptide repeat-containing protein At4g35850, mitochondrial, found in Arabidopsis thaliana (Mouse-ear cress).